Here is a 628-residue protein sequence, read N- to C-terminus: Dual specificity testis-specific protein kinase 1 (628 aa).

The tract at residues 1–35 (MAGERPPLRGPGPGETPVEGPGGAGGGPGRGRPSS) is disordered. Gly residues predominate over residues 20–30 (GPGGAGGGPGR). Positions 52-310 (FDCAEKIGAG…EITQHLEQIL (259 aa)) constitute a Protein kinase domain. Residues 58–66 (IGAGFFSEV) and Lys-81 contribute to the ATP site. Catalysis depends on Asp-170, which acts as the Proton acceptor. Position 215 is a phosphoserine; by autocatalysis (Ser-215). 3 disordered regions span residues 330–376 (TYNQ…DNLT), 424–490 (PESL…QLPL), and 538–568 (RAQHSLPRAAALERTEPSPPPSAPREQEEGL). Position 338 is an omega-N-methylarginine (Arg-338). The segment covering 348–357 (SDPRLSRSRS) has biased composition (basic and acidic residues). Positions 421–526 (VASPESLVQP…NNNPPAVVVN (106 aa)) are required for interaction with YWHAB. Residue Ser-439 is modified to Phosphoserine. Residues 478–487 (EPEPPGPAPQ) are compositionally biased toward pro residues. The interval 529–626 (QGWAREPWNR…PTPSLQLPGA (98 aa)) is required for interaction with PARVA. Residues 529–628 (QGWAREPWNR…PSLQLPGARS (100 aa)) are required for interaction with SPRED1 and SPRY2. Required for TESK1-mediated dephosphorylation of SPRY2 and SPRY2 inhibition of ERK phosphorylation.

Belongs to the protein kinase superfamily. TKL Ser/Thr protein kinase family. Interacts (via both C- and N-termini) with SPRY4 (via C-terminus); the interaction inhibits TESK1 kinase activity. Interacts with TAOK1; the interaction inhibits TAOK1 kinase activity. Interacts (via C-terminus) with SPRED1 (via C-terminus); the interaction inhibits TESK1 kinase activity. Interacts (via C-terminus) with PARVA/PARVIN (via C-terminus); the interaction inhibits TESK1 kinase activity. Interacts with YWHAB/14-3-3 beta; the interaction is dependent on the phosphorylation of TESK1 Ser-439 and inhibits TESK1 kinase activity. Interacts with SPRY1, SPRY3 and SPRED2. Interacts (via C-terminus) with SPRY2 (via C-terminus); the interaction disrupts SPRY2 interaction with PPP2CA/PP2A-C, possibly by vesicular sequestration of SPRY2. Therefore dephosphorylation of SPRY2 by the serine/threonine-protein phosphatase 2A (PP2A) holoenzyme is lost, inhibiting its interaction with GRB2. Mg(2+) is required as a cofactor. It depends on Mn(2+) as a cofactor. Autophosphorylated on serine and tyrosine residues. Weakly expressed in sciatic nerves (at protein level). Highly expressed in testicular germ cells. Expressed at low levels in brain, lung, heart, liver and kidney.

Its subcellular location is the cytoplasm. It localises to the perinuclear region. The protein resides in the cytoskeleton. The protein localises to the microtubule organizing center. It is found in the centrosome. Its subcellular location is the cell projection. It localises to the lamellipodium. The catalysed reaction is L-seryl-[protein] + ATP = O-phospho-L-seryl-[protein] + ADP + H(+). It carries out the reaction L-threonyl-[protein] + ATP = O-phospho-L-threonyl-[protein] + ADP + H(+). The enzyme catalyses L-tyrosyl-[protein] + ATP = O-phospho-L-tyrosyl-[protein] + ADP + H(+). Its activity is regulated as follows. Activated by autophosphorylation on Ser-215. Kinase activity is inhibited by SPRED1. In terms of biological role, dual specificity protein kinase activity catalyzing autophosphorylation and phosphorylation of exogenous substrates on both serine/threonine and tyrosine residues. Regulates the cellular cytoskeleton by enhancing actin stress fiber formation via phosphorylation of cofilin and by preventing microtubule breakdown via inhibition of TAOK1/MARKK kinase activity. Inhibits podocyte motility via regulation of actin cytoskeletal dynamics and phosphorylation of CFL1. Positively regulates integrin-mediated cell spreading, via phosphorylation of cofilin. Suppresses ciliogenesis via multiple pathways; phosphorylation of CFL1, suppression of ciliary vesicle directional trafficking to the ciliary base, and by facilitating YAP1 nuclear localization where it acts as a transcriptional corepressor of the TEAD4 target genes AURKA and PLK1. Probably plays a central role at and after the meiotic phase of spermatogenesis. This Rattus norvegicus (Rat) protein is Dual specificity testis-specific protein kinase 1 (Tesk1).